Consider the following 170-residue polypeptide: Inducible metalloproteinase inhibitor protein (170 aa).

The N-terminal stretch at 1–19 (MKCLLYLCLWCYCVLVSSS) is a signal peptide. 2 N-linked (GlcNAc...) asparagine glycosylation sites follow: Asn48 and Asn149.

Cleaved. Post-translationally, five disulfide bonds are present. When artificially cleaved by thermolysin between Asn-56 and Ile-57, the two obtained chains (called heavy and light chains) remain linked. In terms of processing, the N-terminus is blocked.

Its function is as follows. Inhibits thermolysin, bacillolysin and pseudolysin, B.polymyxa metalloprotease and human MMP1 and MMP3. No activity on trypsin or cysteine protease papain. The sequence is that of Inducible metalloproteinase inhibitor protein (IMPI) from Galleria mellonella (Greater wax moth).